The chain runs to 342 residues: Transmembrane protein 115 homolog (342 aa).

Topologically, residues 1–21 are cytoplasmic; sequence MQYSSRFLELNIPDSFLNINK. A helical transmembrane segment spans residues 22–42; the sequence is IPDATKFITVTYICLTATLFC. Residues 43 to 121 are Lumenal-facing; sequence IRRSLYNKLV…NWNSSKEMFK (79 aa). Asparagine 114 carries an N-linked (GlcNAc...) asparagine glycan. The helical transmembrane segment at 122-142 threads the bilayer; it reads FIIVLGSLTNVLIIMLTLLVS. Over 143–159 the chain is Cytoplasmic; it reads FFSNKVRLDIPLDGNYT. Residues 160-180 traverse the membrane as a helical segment; it reads ILIGFPIIYRQLLPETTIIHL. At 181–207 the chain is on the lumenal side; it reads KTPQFLAKNFRFKLLPIFVMFTMTVTQ. A helical membrane pass occupies residues 208 to 228; that stretch reads IIWFHHFAQLFSIWVTFFASW. Topologically, residues 229 to 342 are cytoplasmic; sequence SYLRFFQKLA…QVLEERMVNP (114 aa).

This sequence belongs to the TMEM115 family. Homooligomer.

The protein resides in the golgi apparatus membrane. May play a role in retrograde transport of proteins from the Golgi to the endoplasmic reticulum. This Saccharomyces cerevisiae (strain ATCC 204508 / S288c) (Baker's yeast) protein is Transmembrane protein 115 homolog.